The chain runs to 247 residues: Protein NipSnap homolog 3A (247 aa).

Lys-48 and Lys-166 each carry N6-acetyllysine.

Belongs to the NipSnap family.

It localises to the cytoplasm. It is found in the cytosol. The polypeptide is Protein NipSnap homolog 3A (NIPSNAP3A) (Pongo abelii (Sumatran orangutan)).